The sequence spans 202 residues: Putative 3-methyladenine DNA glycosylase (202 aa).

This sequence belongs to the DNA glycosylase MPG family.

This chain is Putative 3-methyladenine DNA glycosylase, found in Staphylococcus aureus (strain bovine RF122 / ET3-1).